Here is a 790-residue protein sequence, read N- to C-terminus: GATOR2 complex protein WDR24 (790 aa).

WD repeat units lie at residues 72-112 (SLNL…RNKQ), 118-158 (EHKR…SVST), 161-201 (GQSE…RCER), 205-245 (AHNG…AKEM), 249-291 (QTIA…VPAA), and 295-338 (EHRD…VERA). Ser155 bears the Phosphoserine; by AMPK mark. Residues Ser470 and Ser496 each carry the phosphoserine modification. At Thr581 the chain carries Phosphothreonine. A phosphoserine mark is found at Ser594 and Ser598. The C4-type zinc finger occupies 718 to 740 (NCSHCKRPMSSRGWVCDRCHRCA). Residues Cys719, Cys722, Cys733, Cys736, Cys743, Cys746, Cys757, Cys760, His762, His765, His768, Cys779, Cys783, His785, and Cys787 each coordinate Zn(2+). The RING-type; atypical zinc-finger motif lies at 741–790 (SMCAVCHHVVKGLFVWCQGCSHGGHLQHIMKWLEGSSHCPAGCGHLCEYS).

Belongs to the WD repeat WDR24 family. Component of the GATOR2 subcomplex, composed of MIOS, SEC13, SEH1L, WDR24 and WDR59. The GATOR2 complex interacts with CASTOR1 and CASTOR2; the interaction is negatively regulated by arginine. The GATOR2 complex interacts with SESN1, SESN2 and SESN3; the interaction is negatively regulated by amino acids. SESN1, SESN2 and SESN3 convey leucine availability via direct interaction with SEH1L and WDR24. In terms of processing, phosphorylation at Ser-155 by AMPK in response to glucose deprivation inactivates WDR24 by promoting interaction with 14-3-3 proteins, such as YWHAG, preventing assembly of the GATOR2 complex. Post-translationally, autoubiquitinated; MIOS is required to prevent autoubiquitination.

It localises to the lysosome membrane. It carries out the reaction S-ubiquitinyl-[E2 ubiquitin-conjugating enzyme]-L-cysteine + [acceptor protein]-L-lysine = [E2 ubiquitin-conjugating enzyme]-L-cysteine + N(6)-ubiquitinyl-[acceptor protein]-L-lysine.. Its pathway is protein modification; protein ubiquitination. Its activity is regulated as follows. The GATOR2 complex is negatively regulated by the upstream amino acid sensors CASTOR1 and SESN2, which sequester the GATOR2 complex in absence of amino acids. In the presence of abundant amino acids, GATOR2 is released from CASTOR1 and SESN2 and activated. Catalytic component of the GATOR2 complex, a multiprotein complex that acts as an activator of the amino acid-sensing branch of the mTORC1 signaling pathway. The GATOR2 complex indirectly activates mTORC1 through the inhibition of the GATOR1 subcomplex. GATOR2 probably acts as an E3 ubiquitin-protein ligase toward GATOR1. In the presence of abundant amino acids, the GATOR2 complex mediates ubiquitination of the NPRL2 core component of the GATOR1 complex, leading to GATOR1 inactivation. In the absence of amino acids, GATOR2 is inhibited, activating the GATOR1 complex. In addition to its role in regulation of the mTORC1 complex, promotes the acidification of lysosomes and facilitates autophagic flux. Within the GATOR2 complex, WDR24 constitutes the catalytic subunit that mediates 'Lys-6'-linked ubiquitination of NPRL2. This chain is GATOR2 complex protein WDR24, found in Homo sapiens (Human).